Consider the following 474-residue polypeptide: Siroheme synthase (474 aa).

The interval 1 to 203 (MKLFPLFADL…QRPEEAERLL (203 aa)) is precorrin-2 dehydrogenase /sirohydrochlorin ferrochelatase. NAD(+) is bound by residues 22–23 (EI) and 43–44 (PA). At Ser128 the chain carries Phosphoserine. The uroporphyrinogen-III C-methyltransferase stretch occupies residues 216 to 474 (GSVVLVGAGP…QRPAPAALAA (259 aa)). Residue Pro225 participates in S-adenosyl-L-methionine binding. The Proton acceptor role is filled by Asp248. Lys270 serves as the catalytic Proton donor. S-adenosyl-L-methionine is bound by residues 302–304 (GGD), Ile307, 332–333 (TA), Met384, and Gly413.

The protein in the N-terminal section; belongs to the precorrin-2 dehydrogenase / sirohydrochlorin ferrochelatase family. This sequence in the C-terminal section; belongs to the precorrin methyltransferase family.

It carries out the reaction uroporphyrinogen III + 2 S-adenosyl-L-methionine = precorrin-2 + 2 S-adenosyl-L-homocysteine + H(+). The enzyme catalyses precorrin-2 + NAD(+) = sirohydrochlorin + NADH + 2 H(+). The catalysed reaction is siroheme + 2 H(+) = sirohydrochlorin + Fe(2+). It participates in cofactor biosynthesis; adenosylcobalamin biosynthesis; precorrin-2 from uroporphyrinogen III: step 1/1. The protein operates within cofactor biosynthesis; adenosylcobalamin biosynthesis; sirohydrochlorin from precorrin-2: step 1/1. Its pathway is porphyrin-containing compound metabolism; siroheme biosynthesis; precorrin-2 from uroporphyrinogen III: step 1/1. It functions in the pathway porphyrin-containing compound metabolism; siroheme biosynthesis; siroheme from sirohydrochlorin: step 1/1. It participates in porphyrin-containing compound metabolism; siroheme biosynthesis; sirohydrochlorin from precorrin-2: step 1/1. Multifunctional enzyme that catalyzes the SAM-dependent methylations of uroporphyrinogen III at position C-2 and C-7 to form precorrin-2 via precorrin-1. Then it catalyzes the NAD-dependent ring dehydrogenation of precorrin-2 to yield sirohydrochlorin. Finally, it catalyzes the ferrochelation of sirohydrochlorin to yield siroheme. This Bordetella petrii (strain ATCC BAA-461 / DSM 12804 / CCUG 43448) protein is Siroheme synthase.